Consider the following 284-residue polypeptide: Bifunctional protein FolD (284 aa).

NADP(+) contacts are provided by residues 165–167 (GRS), serine 190, and valine 231.

Belongs to the tetrahydrofolate dehydrogenase/cyclohydrolase family. As to quaternary structure, homodimer.

It carries out the reaction (6R)-5,10-methylene-5,6,7,8-tetrahydrofolate + NADP(+) = (6R)-5,10-methenyltetrahydrofolate + NADPH. It catalyses the reaction (6R)-5,10-methenyltetrahydrofolate + H2O = (6R)-10-formyltetrahydrofolate + H(+). Its pathway is one-carbon metabolism; tetrahydrofolate interconversion. Its function is as follows. Catalyzes the oxidation of 5,10-methylenetetrahydrofolate to 5,10-methenyltetrahydrofolate and then the hydrolysis of 5,10-methenyltetrahydrofolate to 10-formyltetrahydrofolate. The protein is Bifunctional protein FolD of Geobacillus kaustophilus (strain HTA426).